We begin with the raw amino-acid sequence, 40 residues long: Photosystem II reaction center protein T (40 aa).

A helical transmembrane segment spans residues 3–23 (ALVYTFLLVGTLGIIFFAIFF).

The protein belongs to the PsbT family. As to quaternary structure, PSII is composed of 1 copy each of membrane proteins PsbA, PsbB, PsbC, PsbD, PsbE, PsbF, PsbH, PsbI, PsbJ, PsbK, PsbL, PsbM, PsbT, PsbY, PsbZ, Psb30/Ycf12, at least 3 peripheral proteins of the oxygen-evolving complex and a large number of cofactors. It forms dimeric complexes.

It localises to the plastid. The protein localises to the chloroplast thylakoid membrane. Found at the monomer-monomer interface of the photosystem II (PS II) dimer, plays a role in assembly and dimerization of PSII. PSII is a light-driven water plastoquinone oxidoreductase, using light energy to abstract electrons from H(2)O, generating a proton gradient subsequently used for ATP formation. The protein is Photosystem II reaction center protein T of Anthoceros angustus (Hornwort).